The chain runs to 255 residues: Acetylglutamate kinase (255 aa).

Substrate is bound by residues 40–41 (GG), arginine 62, and asparagine 157.

This sequence belongs to the acetylglutamate kinase family. ArgB subfamily.

Its subcellular location is the cytoplasm. It catalyses the reaction N-acetyl-L-glutamate + ATP = N-acetyl-L-glutamyl 5-phosphate + ADP. It functions in the pathway amino-acid biosynthesis; L-arginine biosynthesis; N(2)-acetyl-L-ornithine from L-glutamate: step 2/4. Functionally, catalyzes the ATP-dependent phosphorylation of N-acetyl-L-glutamate. The polypeptide is Acetylglutamate kinase (Parabacteroides distasonis (strain ATCC 8503 / DSM 20701 / CIP 104284 / JCM 5825 / NCTC 11152)).